A 107-amino-acid chain; its full sequence is Small ribosomal subunit protein uS10c (107 aa).

It belongs to the universal ribosomal protein uS10 family. Part of the 30S ribosomal subunit.

It is found in the plastid. It localises to the chloroplast. In terms of biological role, involved in the binding of tRNA to the ribosomes. The sequence is that of Small ribosomal subunit protein uS10c from Phaeodactylum tricornutum (strain CCAP 1055/1).